Here is a 144-residue protein sequence, read N- to C-terminus: Aklanonic acid methyl ester cyclase AcmA (144 aa).

Substrate is bound by residues Asn-51 and Gln-105.

It belongs to the polyketide cyclase DnrD family. Homotetramer.

The catalysed reaction is methyl aklanonate = aklaviketone. It functions in the pathway antibiotic biosynthesis; daunorubicin biosynthesis. Its pathway is antibiotic biosynthesis; carminomycin biosynthesis. It participates in antibiotic biosynthesis; rhodomycin biosynthesis. The protein operates within antibiotic biosynthesis; aclacinomycin biosynthesis. Involved in the biosynthesis of aklavinone which is an important precursor common to the formation of the clinically significant anthracyclines such as carminomycin, daunorubicin (daunomycin), rhodomycin, aclacinomycin T (aklavin) and aclacinomycin A (aclarubicin). These compounds are aromatic polyketide antibiotics that exhibit high cytotoxicity and are widely applied in the chemotherapy of a variety of cancers. Catalyzes the cyclization of aklanonic acid methyl ester to yield aklaviketone. It is also able to use nogalonic acid methyl ester as substrate, but produces exclusively auraviketone with C9-R stereochemistry. This chain is Aklanonic acid methyl ester cyclase AcmA (acma), found in Streptomyces galilaeus.